A 766-amino-acid polypeptide reads, in one-letter code: Polyribonucleotide nucleotidyltransferase (766 aa).

Mg(2+) contacts are provided by D490 and D496. A KH domain is found at 557–616 (PKIDTITIPVDKIKVVIGKGGEQIDKIIAETGVKIDIDDEGLCSIFSSDQSAIDRAKEII). The S1 motif domain occupies 626 to 694 (GEVYEAKVVR…DKGRVDASMR (69 aa)). Basic and acidic residues-rich tracts occupy residues 700–734 (PEGY…DRNN) and 744–766 (FELR…KKPE). Positions 700–766 (PEGYVEPERK…FPELSTKKPE (67 aa)) are disordered.

It belongs to the polyribonucleotide nucleotidyltransferase family. Mg(2+) is required as a cofactor.

The protein localises to the cytoplasm. It carries out the reaction RNA(n+1) + phosphate = RNA(n) + a ribonucleoside 5'-diphosphate. Functionally, involved in mRNA degradation. Catalyzes the phosphorolysis of single-stranded polyribonucleotides processively in the 3'- to 5'-direction. This chain is Polyribonucleotide nucleotidyltransferase, found in Lactococcus lactis subsp. cremoris (strain MG1363).